Here is a 134-residue protein sequence, read N- to C-terminus: Seminal plasma protein PDC-109 (134 aa).

The N-terminal stretch at 1 to 25 (MALQLGLFLIWAGVSVFLQLDPVNG) is a signal peptide. The O-linked (GalNAc...) threonine glycan is linked to Thr36. 2 consecutive Fibronectin type-II domains span residues 44–88 (PEDE…YCAQ) and 89–134 (RDYA…WKYC). 4 cysteine pairs are disulfide-bonded: Cys49/Cys73, Cys63/Cys86, Cys94/Cys119, and Cys108/Cys134.

Belongs to the seminal plasma protein family. Homodimer. Post-translationally, O-linked glycan consists of Gal-GalNAc disaccharide which is modified with a sialic acid residue (macro- and/or microheterogeneity account for differences between BSP-A1 and BSP-A2). Major component of seminal plasma.

It localises to the secreted. In terms of biological role, could enhance the fertilizing capacity of bull spermatozoa upon interaction with heparin-like glycosaminoglycans present in the female genital tract. Exhibits both simulatory and inhibitory actions on the release of pituitary gonadotropins. The protein is Seminal plasma protein PDC-109 of Bos taurus (Bovine).